A 561-amino-acid chain; its full sequence is Interleukin-1 receptor-like 2 (561 aa).

Residues 1-21 (MGMPPLLFCWVSFVLPLFVAA) form the signal peptide. 3 consecutive Ig-like C2-type domains span residues 22-113 (GNCT…INLT), 128-215 (SINS…VRNY), and 225-321 (SGGR…TCHA). Topologically, residues 22 to 338 (GNCTDVYMHH…ILKRPAPDFR (317 aa)) are extracellular. N-linked (GlcNAc...) asparagine glycans are attached at residues Asn-23, Asn-43, Asn-55, Asn-111, and Asn-130. A disulfide bond links Cys-44 and Cys-97. Residues Cys-149 and Cys-199 are joined by a disulfide bond. Residues Asn-231, Asn-237, Asn-253, Asn-269, Asn-290, and Asn-302 are each glycosylated (N-linked (GlcNAc...) asparagine). Cysteines 252 and 319 form a disulfide. A helical membrane pass occupies residues 339–358 (AYLIGGLMAFLLLAVSILYI). Residues 359–561 (YNTFKVDIVL…LLGHTPRIPG (203 aa)) lie on the Cytoplasmic side of the membrane. Positions 384 to 539 (KLYDAYVLYP…KFWKKVRYHM (156 aa)) constitute a TIR domain. Glu-470 is a catalytic residue.

The protein belongs to the interleukin-1 receptor family. As to quaternary structure, interacts with IL1RAP; the association is enhanced by IL36B indicative for an functional signaling complex and inhibited by IL36RN. Predominant expression in the lung and epididymis, with lower expression in cerebral cortex and testis. Expression in the brain is non-neuronal and associated with the cerebral vasculature. Not detected in any cell line tested.

It localises to the membrane. The catalysed reaction is NAD(+) + H2O = ADP-D-ribose + nicotinamide + H(+). Functionally, receptor for interleukin-36 (IL36A, IL36B and IL36G). After binding to interleukin-36 associates with the coreceptor IL1RAP to form the interleukin-36 receptor complex which mediates interleukin-36-dependent activation of NF-kappa-B, MAPK and other pathways. The IL-36 signaling system is thought to be present in epithelial barriers and to take part in local inflammatory response; it is similar to the IL-1 system. Seems to be involved in skin inflammatory response by induction of the IL-23/IL-17/IL-22 pathway. Receptor for the interleukin IL36G. Binding to the agonist leads to the activation of NF-kappa-B. In Rattus norvegicus (Rat), this protein is Interleukin-1 receptor-like 2 (Il1rl2).